We begin with the raw amino-acid sequence, 472 residues long: UDP-N-acetylmuramate--L-alanine ligase (472 aa).

122–128 contacts ATP; sequence GSHGKTT.

This sequence belongs to the MurCDEF family.

It is found in the cytoplasm. It carries out the reaction UDP-N-acetyl-alpha-D-muramate + L-alanine + ATP = UDP-N-acetyl-alpha-D-muramoyl-L-alanine + ADP + phosphate + H(+). It functions in the pathway cell wall biogenesis; peptidoglycan biosynthesis. Cell wall formation. This is UDP-N-acetylmuramate--L-alanine ligase from Prochlorococcus marinus (strain SARG / CCMP1375 / SS120).